A 287-amino-acid chain; its full sequence is ATP synthase gamma chain (287 aa).

It belongs to the ATPase gamma chain family. As to quaternary structure, F-type ATPases have 2 components, CF(1) - the catalytic core - and CF(0) - the membrane proton channel. CF(1) has five subunits: alpha(3), beta(3), gamma(1), delta(1), epsilon(1). CF(0) has three main subunits: a, b and c.

The protein resides in the cell inner membrane. Functionally, produces ATP from ADP in the presence of a proton gradient across the membrane. The gamma chain is believed to be important in regulating ATPase activity and the flow of protons through the CF(0) complex. This is ATP synthase gamma chain from Marinobacter nauticus (strain ATCC 700491 / DSM 11845 / VT8) (Marinobacter aquaeolei).